The sequence spans 98 residues: Large ribosomal subunit protein eL21 (98 aa).

The disordered stretch occupies residues 1 to 24 (MVKMSHGPRSGSRRKLTKSAEERK).

The protein belongs to the eukaryotic ribosomal protein eL21 family.

This Thermoplasma acidophilum (strain ATCC 25905 / DSM 1728 / JCM 9062 / NBRC 15155 / AMRC-C165) protein is Large ribosomal subunit protein eL21 (rpl21e).